Reading from the N-terminus, the 461-residue chain is Phenolic glucoside malonyltransferase 1 (461 aa).

The Proton acceptor role is filled by His167. Positions 167–171 match the HXXXD motif motif; sequence HAAQD. 281–282 lines the malonyl-CoA pocket; sequence ST. Asp400 acts as the Proton acceptor in catalysis. The short motif at 400 to 404 is the DFGWG motif element; the sequence is DFGWG.

This sequence belongs to the plant acyltransferase family. Phenolic glucoside malonyltransferase subfamily. As to expression, expressed in all tissues. Most highly expressed in the abdomen and especially in the gut.

It carries out the reaction a flavonol 3-O-beta-D-glucoside + malonyl-CoA = a flavonol 3-O-(6-O-malonyl-beta-D-glucoside) + CoA. The catalysed reaction is kaempferol 3-O-beta-D-glucoside + malonyl-CoA = kaempferol 3-O-(6-O-malonyl-beta-D-glucoside) + CoA. It catalyses the reaction quercetin 3-O-beta-D-glucoside + malonyl-CoA = quercetin 3-O-(6-O-malonyl-beta-D-glucoside) + CoA. The enzyme catalyses a flavonol 7-O-beta-D-glucoside + malonyl-CoA = a flavonol 7-O-(6-O-malonyl-beta-D-glucoside) + CoA. It carries out the reaction (2S)-naringenin 7-O-beta-D-glucoside + malonyl-CoA = (2S)-naringenin 7-O-(6-O-malonyl-beta-D-glucoside) + CoA. The catalysed reaction is kaempferol 7-O-beta-D-glucoside + malonyl-CoA = kaempferol 7-O-(6-O-malonyl-beta-D-glucoside) + CoA. It catalyses the reaction apigenin 7-O-beta-D-glucoside + malonyl-CoA = apigenin 7-O-(6-O-malonyl-beta-D-glucoside) + CoA. The enzyme catalyses rhaponticin + malonyl-CoA = 6-O-malonyl-rhaponticin + CoA. Phenolic glucoside malonyltransferase that neutralizes phenolic glycosides in host plants. Catalyzes the transfer of a malonyl group from malonyl-CoA to the phenolic glycosides, leading to their detoxification. Phenolic glycosides, which are among the most abundant plant secondary metabolites, act as plant defense compounds: they strongly affect growth, development and behavior of insect herbivores. Has malonyltransferase activity against flavonoids kaempferol 3-O-glucoside, kaempferol 7-O-glucoside, isoquercetin (quercetin 3-O-beta-D-glucopyranoside), apigetrin (apigenin 7-O-beta-D-glucoside) and prunin (naringenin 7-O-beta-D-glucoside). Also has activity toward non-flavonoid rhaponticin, but with lower efficiency. This is Phenolic glucoside malonyltransferase 1 from Bemisia tabaci (Sweetpotato whitefly).